A 624-amino-acid polypeptide reads, in one-letter code: Double-stranded RNA-binding protein Staufen homolog 2 (624 aa).

5 DRBM domains span residues 55–122 (STSI…NGLA), 142–228 (QRAN…SEIS), 254–321 (MKSF…PEYG), 354–422 (RRRE…IADQ), and 540–604 (LTCL…EKAD). The segment at 197–223 (LRNEPIPERSSLNGEANRGPEEDKDAN) is disordered. A compositionally biased stretch (basic and acidic residues) spans 214–223 (RGPEEDKDAN). 2 disordered regions span residues 401 to 428 (EKTGKRGENPDWDEQNSGIADQTSTPKG) and 592 to 624 (PFEQAKLRGEKADNKQANSGTIAQDCKDSKAVV). The segment covering 415–426 (QNSGIADQTSTP) has biased composition (polar residues). Over residues 596-605 (AKLRGEKADN) the composition is skewed to basic and acidic residues.

RNA-binding protein required for the microtubule-dependent transport of RNAs within polarized cell types. This is Double-stranded RNA-binding protein Staufen homolog 2 (stau2) from Xenopus tropicalis (Western clawed frog).